Here is a 408-residue protein sequence, read N- to C-terminus: MDEFFLMNSFDLAGKTVYLRVDINAPVNPLTGEIMGIDRFRAHIDTIRNLRNSKVVIVAHQSRPGKDDFISLRQHAQILSHLLNKRVQFVDQLFGSQVNRAVSEMSDGDIVMLENSRFYSEEVDLTTIESMESSNIVRSLSPLFDYFIIDAFAAIHRAQTTLVGFHRIKPNIAGTLIEREVSMIERFRKIREKPKIAILGGAKIEDSIAVSENFLSRGFVDKILTGGVVANAFLWASGFDIGKKNREFIMKNNGDYEKLLDKCRAILSKYGDKLVMPTDFVMNPSGQRISINEKIPDDQILADIGLDTIVEYSEIIDGARAIFMNGPMGMYEIEDYSSGTREVFTAVAHSKAFKLAGGGHTLSALDKLGLTKMIDHASTGGGALISYLSGETMPVLEALKESKKLFEG.

Residues 22-24 (DIN), Arg39, 60-63 (HQSR), Arg117, and Arg157 each bind substrate. Residues Glu332 and 358 to 361 (GGHT) each bind ATP.

It belongs to the phosphoglycerate kinase family. Monomer.

Its subcellular location is the cytoplasm. It carries out the reaction (2R)-3-phosphoglycerate + ATP = (2R)-3-phospho-glyceroyl phosphate + ADP. It functions in the pathway carbohydrate degradation; glycolysis; pyruvate from D-glyceraldehyde 3-phosphate: step 2/5. The sequence is that of Phosphoglycerate kinase (pgk) from Thermoplasma acidophilum (strain ATCC 25905 / DSM 1728 / JCM 9062 / NBRC 15155 / AMRC-C165).